The primary structure comprises 866 residues: Sphingomyelin phosphodiesterase 4 (866 aa).

Phosphoserine is present on residues S169 and S285. T708 carries the post-translational modification Phosphothreonine. S792 is modified (phosphoserine). A helical transmembrane segment spans residues 822 to 842; that stretch reads LLLAFFVASLFCVGPLPCTLL.

Mg(2+) is required as a cofactor. Widely expressed, with highest levels in heart and skeletal muscle. In terms of tissue distribution, expressed in skeletal muscle (at protein level). As to expression, expressed in skeletal muscle but a lower levels than isoform 1 (at protein level).

The protein localises to the endoplasmic reticulum membrane. It is found in the golgi apparatus membrane. Its subcellular location is the nucleus envelope. The protein resides in the cell membrane. It localises to the sarcolemma. It catalyses the reaction a sphingomyelin + H2O = phosphocholine + an N-acylsphing-4-enine + H(+). Activated by phosphatidylserine and tumor necrosis factor (TNF). Inhibited by scyphostatin. Its function is as follows. Catalyzes the hydrolysis of membrane sphingomyelin to form phosphorylcholine and ceramide. It has a relevant role in the homeostasis of membrane sphingolipids, thereby influencing membrane integrity, and endoplasmic reticulum organization and function. May sensitize cells to DNA damage-induced apoptosis. In skeletal muscle, mediates TNF-stimulated oxidant production. The chain is Sphingomyelin phosphodiesterase 4 from Homo sapiens (Human).